Reading from the N-terminus, the 608-residue chain is Aspartate--tRNA(Asp/Asn) ligase (608 aa).

E187 is an L-aspartate binding site. The interval 211 to 214 is aspartate; that stretch reads QQFK. R233 and H461 together coordinate L-aspartate. 233 to 235 is a binding site for ATP; that stretch reads RDE. E495 contacts ATP. L-aspartate is bound at residue R502. 547-550 provides a ligand contact to ATP; that stretch reads GLDR.

It belongs to the class-II aminoacyl-tRNA synthetase family. Type 1 subfamily. As to quaternary structure, homodimer.

The protein localises to the cytoplasm. The catalysed reaction is tRNA(Asx) + L-aspartate + ATP = L-aspartyl-tRNA(Asx) + AMP + diphosphate. Aspartyl-tRNA synthetase with relaxed tRNA specificity since it is able to aspartylate not only its cognate tRNA(Asp) but also tRNA(Asn). Reaction proceeds in two steps: L-aspartate is first activated by ATP to form Asp-AMP and then transferred to the acceptor end of tRNA(Asp/Asn). The sequence is that of Aspartate--tRNA(Asp/Asn) ligase from Prosthecochloris aestuarii (strain DSM 271 / SK 413).